Consider the following 405-residue polypeptide: Diaminopimelate decarboxylase (405 aa).

Position 46 is an N6-(pyridoxal phosphate)lysine (Lys46). Pyridoxal 5'-phosphate contacts are provided by residues Gly225 and 259 to 262; that span reads EPGR. Arg262, Arg298, and Tyr302 together coordinate substrate. Cys329 (proton donor) is an active-site residue. 2 residues coordinate substrate: Glu330 and Tyr358. Tyr358 serves as a coordination point for pyridoxal 5'-phosphate.

This sequence belongs to the Orn/Lys/Arg decarboxylase class-II family. LysA subfamily. Homodimer. Requires pyridoxal 5'-phosphate as cofactor.

The catalysed reaction is meso-2,6-diaminopimelate + H(+) = L-lysine + CO2. The protein operates within amino-acid biosynthesis; L-lysine biosynthesis via DAP pathway; L-lysine from DL-2,6-diaminopimelate: step 1/1. Functionally, specifically catalyzes the decarboxylation of meso-diaminopimelate (meso-DAP) to L-lysine. This is Diaminopimelate decarboxylase from Helicobacter pylori (strain ATCC 700392 / 26695) (Campylobacter pylori).